A 155-amino-acid chain; its full sequence is Interleukin-2 (155 aa).

The signal sequence occupies residues Met-1–Ser-20. Residue Thr-23 is glycosylated (O-linked (GalNAc...) threonine). An intrachain disulfide couples Cys-78 to Cys-126.

Belongs to the IL-2 family.

The protein localises to the secreted. In terms of biological role, cytokine produced by activated CD4-positive helper T-cells and to a lesser extend activated CD8-positive T-cells and natural killer (NK) cells that plays pivotal roles in the immune response and tolerance. Binds to a receptor complex composed of either the high-affinity trimeric IL-2R (IL2RA/CD25, IL2RB/CD122 and IL2RG/CD132) or the low-affinity dimeric IL-2R (IL2RB and IL2RG). Interaction with the receptor leads to oligomerization and conformation changes in the IL-2R subunits resulting in downstream signaling starting with phosphorylation of JAK1 and JAK3. In turn, JAK1 and JAK3 phosphorylate the receptor to form a docking site leading to the phosphorylation of several substrates including STAT5. This process leads to activation of several pathways including STAT, phosphoinositide-3-kinase/PI3K and mitogen-activated protein kinase/MAPK pathways. Functions as a T-cell growth factor and can increase NK-cell cytolytic activity as well. Promotes strong proliferation of activated B-cells and subsequently immunoglobulin production. Plays a pivotal role in regulating the adaptive immune system by controlling the survival and proliferation of regulatory T-cells, which are required for the maintenance of immune tolerance. Moreover, participates in the differentiation and homeostasis of effector T-cell subsets, including Th1, Th2, Th17 as well as memory CD8-positive T-cells. In Rattus norvegicus (Rat), this protein is Interleukin-2 (Il2).